Here is a 426-residue protein sequence, read N- to C-terminus: Gamma-glutamyl phosphate reductase (426 aa).

This sequence belongs to the gamma-glutamyl phosphate reductase family.

It is found in the cytoplasm. The enzyme catalyses L-glutamate 5-semialdehyde + phosphate + NADP(+) = L-glutamyl 5-phosphate + NADPH + H(+). The protein operates within amino-acid biosynthesis; L-proline biosynthesis; L-glutamate 5-semialdehyde from L-glutamate: step 2/2. Its function is as follows. Catalyzes the NADPH-dependent reduction of L-glutamate 5-phosphate into L-glutamate 5-semialdehyde and phosphate. The product spontaneously undergoes cyclization to form 1-pyrroline-5-carboxylate. This chain is Gamma-glutamyl phosphate reductase, found in Paracidovorax citrulli (strain AAC00-1) (Acidovorax citrulli).